Here is a 784-residue protein sequence, read N- to C-terminus: Ribosome biogenesis protein BOP1 homolog (784 aa).

The segment covering 1–11 (MTKKLALKRKG) has biased composition (basic residues). The interval 1-159 (MTKKLALKRK…DSDTSDEEDI (159 aa)) is disordered. Composition is skewed to acidic residues over residues 27 to 36 (SENEEEEEDL), 45 to 54 (EDSTDDEGID), 62 to 73 (SEELQFESDEEG), and 84 to 111 (AEED…EDEE). The segment covering 112 to 123 (KDSKSKQADDKP) has biased composition (basic and acidic residues). The segment covering 124–133 (SSSGAASKKA) has biased composition (low complexity). The segment covering 138–148 (LSKRDTSKPEY) has biased composition (basic and acidic residues). A compositionally biased stretch (acidic residues) spans 149-158 (QDSDTSDEED). 7 WD repeats span residues 445–486 (GHTD…RTIE), 488–526 (DEVV…KVLV), 570–612 (THFK…SQIP), 615–653 (KSKG…LVKK), 656–695 (TNSK…KPYQ), 699–738 (LHRN…DLLQ), and 754–784 (RDEF…RLYT).

It belongs to the WD repeat BOP1/ERB1 family.

The protein resides in the nucleus. Its subcellular location is the nucleolus. It is found in the nucleoplasm. Required for maturation of ribosomal RNAs and formation of the large ribosomal subunit. The polypeptide is Ribosome biogenesis protein BOP1 homolog (Drosophila yakuba (Fruit fly)).